Here is a 269-residue protein sequence, read N- to C-terminus: UPF0761 membrane protein HI_0276 (269 aa).

6 consecutive transmembrane segments (helical) span residues 32–52 (MLAMVPLVMVIFSIFSAFPVF), 89–109 (MSAVGIVSLIAVALMLINNID), 128–148 (FAIYWMILTLGPLIIGVSIGI), 168–188 (LLSFVPFLFTWFIFTLIYTVV), 203–223 (FLAAIFFTLGKQAFTWYIVTF), and 232–252 (AMATLPIMLLWIQISWLVVLV).

Belongs to the UPF0761 family.

Its subcellular location is the cell inner membrane. In Haemophilus influenzae (strain ATCC 51907 / DSM 11121 / KW20 / Rd), this protein is UPF0761 membrane protein HI_0276.